A 429-amino-acid chain; its full sequence is MANVTVIGAQWGDEGKGKIVDWLASRADAVVRFQGGHNAGHTLVVGEQVYKLSLLPSGIVTGTLSIIGNGVVLDPWALKAEIEKLTGQGVEINAENFAIADNCPLILPLHRDLDGLREQAAGAGKIGTTGRGIGPAYEDKVGRRAIRVCDLAHLDALDAQLDRLCAHHDALRAGFGQPPVDRAALIEELREIAPYVLQFAQPVWKRLNTVRKAGARILFEGAQGVLLDVDHGTYPFVTSSNTVSGTAASGSGLGPAQTGFVLGIVKAYTTRVGSGPFPTELEDETGQRLGERGHEFGTVTGRKRRCGWFDAVLVRQSCAISGVTGIALTKLDVLDGFEKVKICTGYRLRGKVLDYFPSHAADQAEVEPIYEEMDGWSGTTAGARSWADLPAQAIKYIQRVQELIETPVALVSTSPEREDTILVRDPFVD.

GTP-binding positions include 12–18 (GDEGKGK) and 40–42 (GHT). Asp13 (proton acceptor) is an active-site residue. Residues Asp13 and Gly40 each contribute to the Mg(2+) site. Residues 13 to 16 (DEGK), 38 to 41 (NAGH), Thr129, Arg143, Gln223, Thr238, and Arg302 contribute to the IMP site. The active-site Proton donor is His41. 298 to 304 (TVTGRKR) provides a ligand contact to substrate. GTP is bound by residues Arg304, 330-332 (KLD), and 412-414 (STS).

This sequence belongs to the adenylosuccinate synthetase family. Homodimer. The cofactor is Mg(2+).

Its subcellular location is the cytoplasm. The enzyme catalyses IMP + L-aspartate + GTP = N(6)-(1,2-dicarboxyethyl)-AMP + GDP + phosphate + 2 H(+). It participates in purine metabolism; AMP biosynthesis via de novo pathway; AMP from IMP: step 1/2. Functionally, plays an important role in the de novo pathway of purine nucleotide biosynthesis. Catalyzes the first committed step in the biosynthesis of AMP from IMP. The chain is Adenylosuccinate synthetase from Novosphingobium aromaticivorans (strain ATCC 700278 / DSM 12444 / CCUG 56034 / CIP 105152 / NBRC 16084 / F199).